The primary structure comprises 164 residues: UPF0251 protein MM_1448 (164 aa).

Positions 91–100 (GDYRMPRGDR) are enriched in basic and acidic residues. The disordered stretch occupies residues 91–123 (GDYRMPRGDRTGPAGQGPAGGGRGRGQGKGRGG). The span at 104–115 (AGQGPAGGGRGR) shows a compositional bias: gly residues.

This sequence belongs to the UPF0251 family.

In Methanosarcina mazei (strain ATCC BAA-159 / DSM 3647 / Goe1 / Go1 / JCM 11833 / OCM 88) (Methanosarcina frisia), this protein is UPF0251 protein MM_1448.